We begin with the raw amino-acid sequence, 259 residues long: Phosphatidylglycerol--prolipoprotein diacylglyceryl transferase (259 aa).

The next 4 helical transmembrane spans lie at 12–32 (LAIH…VYLA), 41–61 (ISSD…IVGA), 80–100 (IIAI…GALV), and 109–129 (VLNP…AQAI). A 1,2-diacyl-sn-glycero-3-phospho-(1'-sn-glycerol) is bound at residue R131. The next 3 helical transmembrane spans lie at 167 to 187 (IPTF…IMMW), 194 to 214 (LLDG…RLVI), and 226 to 246 (GIRI…IFVI).

This sequence belongs to the Lgt family.

The protein localises to the cell membrane. It carries out the reaction L-cysteinyl-[prolipoprotein] + a 1,2-diacyl-sn-glycero-3-phospho-(1'-sn-glycerol) = an S-1,2-diacyl-sn-glyceryl-L-cysteinyl-[prolipoprotein] + sn-glycerol 1-phosphate + H(+). The protein operates within protein modification; lipoprotein biosynthesis (diacylglyceryl transfer). Catalyzes the transfer of the diacylglyceryl group from phosphatidylglycerol to the sulfhydryl group of the N-terminal cysteine of a prolipoprotein, the first step in the formation of mature lipoproteins. In Streptococcus pyogenes serotype M49 (strain NZ131), this protein is Phosphatidylglycerol--prolipoprotein diacylglyceryl transferase.